The sequence spans 438 residues: Histidinol dehydrogenase (438 aa).

Residues Y138, Q199, and N222 each contribute to the NAD(+) site. Residues S245, Q267, and H270 each contribute to the substrate site. Residues Q267 and H270 each contribute to the Zn(2+) site. Active-site proton acceptor residues include E335 and H336. The substrate site is built by H336, D369, E423, and H428. D369 provides a ligand contact to Zn(2+). H428 lines the Zn(2+) pocket.

Belongs to the histidinol dehydrogenase family. The cofactor is Zn(2+).

It carries out the reaction L-histidinol + 2 NAD(+) + H2O = L-histidine + 2 NADH + 3 H(+). Its pathway is amino-acid biosynthesis; L-histidine biosynthesis; L-histidine from 5-phospho-alpha-D-ribose 1-diphosphate: step 9/9. Functionally, catalyzes the sequential NAD-dependent oxidations of L-histidinol to L-histidinaldehyde and then to L-histidine. The chain is Histidinol dehydrogenase from Burkholderia lata (strain ATCC 17760 / DSM 23089 / LMG 22485 / NCIMB 9086 / R18194 / 383).